Consider the following 295-residue polypeptide: Light-independent protochlorophyllide reductase iron-sulfur ATP-binding protein (295 aa).

Residues 39–44 and lysine 68 contribute to the ATP site; that span reads GIGKST. Serine 43 contributes to the Mg(2+) binding site. Residues cysteine 124 and cysteine 158 each coordinate [4Fe-4S] cluster. Residue 209 to 210 participates in ATP binding; that stretch reads NR.

Belongs to the NifH/BchL/ChlL family. In terms of assembly, homodimer. Protochlorophyllide reductase is composed of three subunits; ChlL, ChlN and ChlB. [4Fe-4S] cluster serves as cofactor.

The enzyme catalyses chlorophyllide a + oxidized 2[4Fe-4S]-[ferredoxin] + 2 ADP + 2 phosphate = protochlorophyllide a + reduced 2[4Fe-4S]-[ferredoxin] + 2 ATP + 2 H2O. It participates in porphyrin-containing compound metabolism; chlorophyll biosynthesis (light-independent). Its function is as follows. Component of the dark-operative protochlorophyllide reductase (DPOR) that uses Mg-ATP and reduced ferredoxin to reduce ring D of protochlorophyllide (Pchlide) to form chlorophyllide a (Chlide). This reaction is light-independent. The L component serves as a unique electron donor to the NB-component of the complex, and binds Mg-ATP. This is Light-independent protochlorophyllide reductase iron-sulfur ATP-binding protein from Prochlorococcus marinus (strain MIT 9515).